The sequence spans 792 residues: Zinc finger CCCH domain-containing protein 11A (792 aa).

C3H1-type zinc fingers lie at residues 2-29 (PNQG…HCEA), 31-57 (LGNE…HMEI), and 60-87 (KRSE…HTRS). 3 disordered regions span residues 103–191 (PTVP…VHNG), 223–331 (KKMK…KAGE), and 345–443 (ASQK…RSMQ). A Phosphoserine modification is found at serine 108. Residues lysine 114 and lysine 124 each participate in a glycyl lysine isopeptide (Lys-Gly) (interchain with G-Cter in SUMO2) cross-link. The span at 115–135 (TSQLTVQQSKLSVQSNPSPQL) shows a compositional bias: polar residues. The residue at position 132 (serine 132) is a Phosphoserine. Residue lysine 140 forms a Glycyl lysine isopeptide (Lys-Gly) (interchain with G-Cter in SUMO2) linkage. A phosphoserine mark is found at serine 149, serine 171, and serine 289. Acidic residues predominate over residues 160–175 (ADDDEDDDDQFSEEGD). Basic and acidic residues-rich tracts occupy residues 308 to 331 (KKVE…KAGE) and 345 to 360 (ASQK…KAEE). Residues 338 to 360 (EEILLERASQKRGELQTKLKAEE) adopt a coiled-coil conformation. Serine 346 bears the Phosphoserine mark. A compositionally biased stretch (low complexity) spans 367–376 (SPSGTKSSSS). Basic and acidic residues-rich tracts occupy residues 393–405 (QQEM…KKDT) and 431–443 (QPEE…RSMQ). Lysine 454 is covalently cross-linked (Glycyl lysine isopeptide (Lys-Gly) (interchain with G-Cter in SUMO2)). 2 disordered regions span residues 458–531 (ALRV…PTKL) and 545–571 (QRLQ…ASSY). A compositionally biased stretch (polar residues) spans 461 to 473 (VQQSSESSGNSRP). 2 stretches are compositionally biased toward basic and acidic residues: residues 492-501 (GVKEEKKCGL) and 545-558 (QRLQ…KEKA). Lysine 601 participates in a covalent cross-link: Glycyl lysine isopeptide (Lys-Gly) (interchain with G-Cter in SUMO2). The disordered stretch occupies residues 690–750 (LSEDKPVTMS…SASTGKPPLS (61 aa)). Polar residues predominate over residues 698–715 (MSETENPKDSSVLSSAQA). Residues 717 to 730 (SEPLLPEGSGPSSS) are compositionally biased toward low complexity.

In terms of assembly, interacts with TREX complex components THOC2, DDX39 and POLDIP3; the interactions are ATP-dependent. Interacts with PABPN1; this interaction retains ZC3H11A in nuclear speckles. Interacts with KPNA3.

It is found in the nucleus speckle. Its function is as follows. Through its association with TREX complex components, may participate in the export and post-transcriptional coordination of selected mRNA transcripts, including those required to maintain the metabolic processes in embryonic cells. Binds RNA. This chain is Zinc finger CCCH domain-containing protein 11A (Zc3h11a), found in Mus musculus (Mouse).